A 75-amino-acid chain; its full sequence is Protein myomixer (75 aa).

The Cytoplasmic segment spans residues Met-1–Phe-5. A helical transmembrane segment spans residues Leu-6–Leu-28. At Arg-29–Asn-75 the chain is on the extracellular side. The AxLyCxL motif lies at Ala-58–Leu-67.

Belongs to the MYMX family. As to expression, specifically expressed in the developing myotome.

It is found in the cell membrane. Functionally, myoblast-specific protein that mediates myoblast fusion, an essential step for the formation of multi-nucleated muscle fibers. Involved in membrane fusion downstream of the lipid mixing step mediated by mymk. Acts by generating membrane stresses via its extracellular C-terminus, leading to drive fusion pore formation. This chain is Protein myomixer, found in Danio rerio (Zebrafish).